Reading from the N-terminus, the 1134-residue chain is Phospholipid-transporting ATPase IH (1134 aa).

Residues 1–61 (MDCSLVRTLV…SSKYTFWNFI (61 aa)) lie on the Cytoplasmic side of the membrane. A helical transmembrane segment spans residues 62-82 (PKNLFEQFRRVANFYFLIIFL). Topologically, residues 83–88 (VQLIID) are extracellular. A helical transmembrane segment spans residues 89-110 (TPTSPVTSGLPLFFVITVTAIK). The Cytoplasmic segment spans residues 111-296 (QGYEDWLRHK…SAVEKSMNAF (186 aa)). The chain crosses the membrane as a helical span at residues 297 to 318 (LIVYLCILISKALINTVLKYMW). Over 319–349 (QSEPFRDEPWYNQKTESERQRNLFLKAFTDF) the chain is Extracellular. Residues 350 to 372 (LAFMVLFNYIIPVSMYVTVEMQK) form a helical membrane-spanning segment. Residues 373–881 (FLGSYFITWD…GHFYYIRISE (509 aa)) are Cytoplasmic-facing. Residue D414 is the 4-aspartylphosphate intermediate of the active site. 10 residues coordinate ATP: D414, K415, T416, E511, F553, K576, R607, T687, G688, and D689. Residue D414 participates in Mg(2+) binding. T416 contacts Mg(2+). S738 carries the phosphoserine modification. Residues R798 and K804 each coordinate ATP. D825 serves as a coordination point for Mg(2+). ATP is bound by residues N828 and D829. D829 contacts Mg(2+). The chain crosses the membrane as a helical span at residues 882-902 (LVQYFFYKNVCFIFPQFLYQF). Over 903 to 914 (FCGFSQQTLYDT) the chain is Extracellular. The helical transmembrane segment at 915 to 934 (AYLTLYNISFTSLPILLYSL) threads the bilayer. Residues 935–964 (MEQHVGIDVLKRDPTLYRDVAKNALLRWRV) are Cytoplasmic-facing. A helical transmembrane segment spans residues 965-986 (FIYWTLLGLFDALVFFFGAYFV). At 987–1000 (FENTTVTSNGQIFG) the chain is on the extracellular side. The helical transmembrane segment at 1001-1023 (NWTFGTLVFTVMVFTVTLKLALD) threads the bilayer. Residues 1024–1029 (THYWTW) are Cytoplasmic-facing. Residues 1030–1050 (INHFVIWGSLLFYVVFSLLWG) traverse the membrane as a helical segment. At 1051–1068 (GVIWPFLNYQRMYYVFIQ) the chain is on the extracellular side. A helical membrane pass occupies residues 1069–1093 (MLSSGPAWLAIVLLVTISLLPDVLK). Over 1094-1134 (KVLCRQLWPTATERVQTKSQCLSVEQSTIFMLSQTSSSLSF) the chain is Cytoplasmic.

This sequence belongs to the cation transport ATPase (P-type) (TC 3.A.3) family. Type IV subfamily. In terms of assembly, component of a P4-ATPase flippase complex which consists of a catalytic alpha subunit ATP11A and an accessory beta subunit TMEM30A. Requires Mg(2+) as cofactor. Post-translationally, proteolytically cleaved by CASP3. Widely expressed. Expressed in myoblasts.

The protein localises to the cell membrane. The protein resides in the early endosome. It is found in the recycling endosome. It localises to the endoplasmic reticulum membrane. It catalyses the reaction ATP + H2O + phospholipidSide 1 = ADP + phosphate + phospholipidSide 2.. It carries out the reaction a 1,2-diacyl-sn-glycero-3-phospho-L-serine(out) + ATP + H2O = a 1,2-diacyl-sn-glycero-3-phospho-L-serine(in) + ADP + phosphate + H(+). The enzyme catalyses a 1,2-diacyl-sn-glycero-3-phosphoethanolamine(out) + ATP + H2O = a 1,2-diacyl-sn-glycero-3-phosphoethanolamine(in) + ADP + phosphate + H(+). The flippase activity is inactivated by caspase-mediated cleavage in apoptotic cells, allowing for PS exposure on the cell surface and engulfment of apoptotic cells by macrophages. The ATPase activity is up-regulated by aminophospholipids PS and PE and down-regulated by increasing intracellular Ca2+ levels. In terms of biological role, catalytic component of a P4-ATPase flippase complex which catalyzes the hydrolysis of ATP coupled to the transport of aminophospholipids, phosphatidylserines (PS) and phosphatidylethanolamines (PE), from the outer to the inner leaflet of the plasma membrane. Does not show flippase activity toward phosphatidylcholine (PC). Contributes to the maintenance of membrane lipid asymmetry with a specific role in morphogenesis of muscle cells. In myoblasts, mediates PS enrichment at the inner leaflet of plasma membrane, triggering PIEZO1-dependent Ca2+ influx and Rho GTPases signal transduction, subsequently leading to the assembly of cortical actomyosin fibers and myotube formation. May be involved in the uptake of farnesyltransferase inhibitor drugs, such as lonafarnib. The polypeptide is Phospholipid-transporting ATPase IH (ATP11A) (Homo sapiens (Human)).